The chain runs to 360 residues: MSKEKALESALSQIEKQFGKGSIMRLGDQETAHDIDVIPSGIIALDVALGIGGYPKGRIIEIYGHESSGKTTLTLLAIAQCQKQGGVAAFIDAEHALDPKYAKLLGVDVDNLIVSQPDTGEQALEIADMLVRSGGIDIVVIDSVAALTPKAEIEGDMGDSHMGLQARLMSQALRKLTANIKRSNTLVMFINQIRMKIGVMFGNPETTTGGNALKFYASVRLEVRKGGSIKDGVDVSGNEIKVKIVKNKVAPPFKQAEFELIYGEGISLEAELIDLGAKYEIIEKSGAWYSYKGKKIGQGKEKSKEYLKENTLERDEIEKALLQLLLPQKYAVQEQVQPEPKSKQSKSKQASEQATQDELI.

Residue 64 to 71 participates in ATP binding; sequence GHESSGKT. Residues 333-360 form a disordered region; it reads QEQVQPEPKSKQSKSKQASEQATQDELI.

This sequence belongs to the RecA family.

It localises to the cytoplasm. In terms of biological role, can catalyze the hydrolysis of ATP in the presence of single-stranded DNA, the ATP-dependent uptake of single-stranded DNA by duplex DNA, and the ATP-dependent hybridization of homologous single-stranded DNAs. It interacts with LexA causing its activation and leading to its autocatalytic cleavage. This is Protein RecA from Francisella philomiragia subsp. philomiragia (strain ATCC 25017 / CCUG 19701 / FSC 153 / O#319-036).